The following is a 290-amino-acid chain: N-acetylmannosamine kinase (290 aa).

ATP is bound by residues Ala-6 to Lys-13 and Gly-132 to Leu-139. His-156, Cys-166, Cys-168, and Cys-173 together coordinate Zn(2+).

This sequence belongs to the ROK (NagC/XylR) family. NanK subfamily. As to quaternary structure, homodimer.

The enzyme catalyses an N-acyl-D-mannosamine + ATP = an N-acyl-D-mannosamine 6-phosphate + ADP + H(+). It participates in amino-sugar metabolism; N-acetylneuraminate degradation; D-fructose 6-phosphate from N-acetylneuraminate: step 2/5. Catalyzes the phosphorylation of N-acetylmannosamine (ManNAc) to ManNAc-6-P. This Yersinia pestis (strain Pestoides F) protein is N-acetylmannosamine kinase.